The primary structure comprises 257 residues: Diphthine synthase (257 aa).

S-adenosyl-L-methionine-binding positions include Leu9, Asp85, Val88, 113–114 (SI), Leu164, Ala207, and His232.

This sequence belongs to the diphthine synthase family. In terms of assembly, homodimer.

The catalysed reaction is 2-[(3S)-amino-3-carboxypropyl]-L-histidyl-[translation elongation factor 2] + 3 S-adenosyl-L-methionine = diphthine-[translation elongation factor 2] + 3 S-adenosyl-L-homocysteine + 3 H(+). Its pathway is protein modification; peptidyl-diphthamide biosynthesis. S-adenosyl-L-methionine-dependent methyltransferase that catalyzes the trimethylation of the amino group of the modified target histidine residue in translation elongation factor 2 (EF-2), to form an intermediate called diphthine. The three successive methylation reactions represent the second step of diphthamide biosynthesis. The protein is Diphthine synthase of Methanococcus aeolicus (strain ATCC BAA-1280 / DSM 17508 / OCM 812 / Nankai-3).